Consider the following 114-residue polypeptide: Methylamine utilization protein MauL (114 aa).

Its pathway is one-carbon metabolism; methylamine degradation. Probably involved in TTQ prosthetic group biosynthesis. In Methylorubrum extorquens (strain ATCC 14718 / DSM 1338 / JCM 2805 / NCIMB 9133 / AM1) (Methylobacterium extorquens), this protein is Methylamine utilization protein MauL (mauL).